The primary structure comprises 318 residues: Acetaldehyde dehydrogenase 2 (318 aa).

NAD(+) is bound at residue serine 9 to isoleucine 12. The active-site Acyl-thioester intermediate is the cysteine 129. Residues serine 160–asparagine 168 and asparagine 288 each bind NAD(+).

It belongs to the acetaldehyde dehydrogenase family.

The catalysed reaction is acetaldehyde + NAD(+) + CoA = acetyl-CoA + NADH + H(+). The polypeptide is Acetaldehyde dehydrogenase 2 (Mycolicibacterium vanbaalenii (strain DSM 7251 / JCM 13017 / BCRC 16820 / KCTC 9966 / NRRL B-24157 / PYR-1) (Mycobacterium vanbaalenii)).